Consider the following 173-residue polypeptide: Endoribonuclease YbeY (173 aa).

Residues His120, His124, and His130 each contribute to the Zn(2+) site.

The protein belongs to the endoribonuclease YbeY family. The cofactor is Zn(2+).

The protein localises to the cytoplasm. In terms of biological role, single strand-specific metallo-endoribonuclease involved in late-stage 70S ribosome quality control and in maturation of the 3' terminus of the 16S rRNA. The chain is Endoribonuclease YbeY from Kineococcus radiotolerans (strain ATCC BAA-149 / DSM 14245 / SRS30216).